A 231-amino-acid chain; its full sequence is Probable caffeoyl-CoA O-methyltransferase 2 (231 aa).

S-adenosyl-L-methionine contacts are provided by residues Thr-53, Asp-75, 77-78, Ser-83, Asp-101, Ala-130, Asp-152, Asp-154, and Tyr-161; that span reads GV. A divalent metal cation is bound at residue Asp-152. The a divalent metal cation site is built by Asp-178 and Asn-179.

This sequence belongs to the class I-like SAM-binding methyltransferase superfamily. Cation-dependent O-methyltransferase family. CCoAMT subfamily.

It carries out the reaction (E)-caffeoyl-CoA + S-adenosyl-L-methionine = (E)-feruloyl-CoA + S-adenosyl-L-homocysteine + H(+). The sequence is that of Probable caffeoyl-CoA O-methyltransferase 2 (omt6) from Dictyostelium discoideum (Social amoeba).